Here is a 194-residue protein sequence, read N- to C-terminus: Mpv17-like protein (194 aa).

The Cytoplasmic segment spans residues 1-14 (MASWWRAFPQAARR). A helical membrane pass occupies residues 15-34 (YPWPTNVLLYAGLFSAGDAL). The targeting to peroxisomes stretch occupies residues 16 to 55 (PWPTNVLLYAGLFSAGDALQQRLRGGPADWRQTRRVATLA). At 35 to 50 (QQRLRGGPADWRQTRR) the chain is on the lumenal side. Residues 51–67 (VATLAVTFHGNFNYVWL) traverse the membrane as a helical segment. Over 68–91 (RLLERALPGRAPRTVLAKVLCDQT) the chain is Cytoplasmic. Residues 92 to 110 (VGGPIALSAFYVGMSVLQG) traverse the membrane as a helical segment. Over 111 to 150 (KDDIFLDLKQKFWNTYKSGLMYWPFVQLTNFSLVPVHWRT) the chain is Lumenal. The helical transmembrane segment at 151-168 (AYTGLCAFLWATFLCFSQ) threads the bilayer. Topologically, residues 169-194 (QSGDGTLQSIFIFLRRKEASDKSPEK) are cytoplasmic.

This sequence belongs to the peroxisomal membrane protein PXMP2/4 family. As to expression, isoform 1 and isoform 3 are expressed in the kidney (at protein level). Isoform 1 is expressed in the kidney, spleen, heart, brain, lung and liver. Isoform 3 is expressed in the kidney. Isoform 1 and isoform 3 expression increase during development, reache their highest level in adulthood and decrease with aging.

The protein resides in the peroxisome membrane. It is found in the cytoplasm. In terms of biological role, participates in reactive oxygen species metabolism by up- or down-regulation of the genes of antioxidant enzymes. Protective against the mitochondrial apoptotic cascade. Functionally, participates in reactive oxygen species metabolism by up- or down-regulation of the genes of antioxidant enzymes. This chain is Mpv17-like protein (Mpv17l), found in Mus musculus (Mouse).